Here is a 676-residue protein sequence, read N- to C-terminus: DNA ligase (676 aa).

Residues 41–45 (DLTYD), 90–91 (SL), and Glu-123 each bind NAD(+). The N6-AMP-lysine intermediate role is filled by Lys-125. 4 residues coordinate NAD(+): Arg-146, Glu-180, Lys-293, and Lys-317. The Zn(2+) site is built by Cys-408, Cys-411, Cys-424, and Cys-429.

It belongs to the NAD-dependent DNA ligase family. LigA subfamily. Requires Mg(2+) as cofactor. Mn(2+) is required as a cofactor.

The catalysed reaction is NAD(+) + (deoxyribonucleotide)n-3'-hydroxyl + 5'-phospho-(deoxyribonucleotide)m = (deoxyribonucleotide)n+m + AMP + beta-nicotinamide D-nucleotide.. Its function is as follows. DNA ligase that catalyzes the formation of phosphodiester linkages between 5'-phosphoryl and 3'-hydroxyl groups in double-stranded DNA using NAD as a coenzyme and as the energy source for the reaction. It is essential for DNA replication and repair of damaged DNA. The protein is DNA ligase of Borrelia turicatae (strain 91E135).